Here is an 819-residue protein sequence, read N- to C-terminus: Leucine--tRNA ligase (819 aa).

Positions 36 to 46 (PYPSGKIHMGH) match the 'HIGH' region motif. A 'KMSKS' region motif is present at residues 586–590 (KMSKS). Lys589 contributes to the ATP binding site.

Belongs to the class-I aminoacyl-tRNA synthetase family.

It localises to the cytoplasm. It carries out the reaction tRNA(Leu) + L-leucine + ATP = L-leucyl-tRNA(Leu) + AMP + diphosphate. In Wolbachia pipientis subsp. Culex pipiens (strain wPip), this protein is Leucine--tRNA ligase.